The primary structure comprises 434 residues: Enolase (434 aa).

Q163 provides a ligand contact to (2R)-2-phosphoglycerate. E205 acts as the Proton donor in catalysis. Residues D242, E291, and D318 each coordinate Mg(2+). (2R)-2-phosphoglycerate-binding residues include K343, R372, S373, and K394. The active-site Proton acceptor is K343.

Belongs to the enolase family. Mg(2+) is required as a cofactor.

The protein localises to the cytoplasm. Its subcellular location is the secreted. It is found in the cell surface. The catalysed reaction is (2R)-2-phosphoglycerate = phosphoenolpyruvate + H2O. The protein operates within carbohydrate degradation; glycolysis; pyruvate from D-glyceraldehyde 3-phosphate: step 4/5. In terms of biological role, catalyzes the reversible conversion of 2-phosphoglycerate (2-PG) into phosphoenolpyruvate (PEP). It is essential for the degradation of carbohydrates via glycolysis. The sequence is that of Enolase from Streptococcus thermophilus (strain ATCC BAA-491 / LMD-9).